Reading from the N-terminus, the 380-residue chain is Ankyrin repeat domain-containing protein 63 (380 aa).

ANK repeat units follow at residues A11 to I40, Q46 to L79, R83 to A112, A116 to L145, and A153 to A182. Low complexity-rich tracts occupy residues A181–S203 and R216–A226. The segment at A181–S256 is disordered. S193 is subject to Phosphoserine. S294 carries the post-translational modification Phosphoserine. The tract at residues P309–Q368 is disordered.

The chain is Ankyrin repeat domain-containing protein 63 from Homo sapiens (Human).